Consider the following 963-residue polypeptide: Kinesin-1 heavy chain (963 aa).

Position 2 is an N-acetylalanine (A2). Positions N8–I325 constitute a Kinesin motor domain. G85 to T92 serves as a coordination point for ATP. A Glycyl lysine isopeptide (Lys-Gly) (interchain with G-Cter in SUMO2) cross-link involves residue K213. Residues C330–R913 adopt a coiled-coil conformation. Positions S908–A963 are disordered. The interval G915–A963 is globular. Phosphoserine is present on residues S933 and S945. Residue R956 is modified to Omega-N-methylarginine.

It belongs to the TRAFAC class myosin-kinesin ATPase superfamily. Kinesin family. Kinesin subfamily. In terms of assembly, oligomer composed of two heavy chains and two light chains. Interacts with GRIP1 and PPP1R42. Interacts with SYBU. Interacts with JAKMIP1. Interacts with PLEKHM2. Interacts with ECPAS. Interacts with ZFYVE27. Found in a complex with OGT, RHOT1, RHOT2 and TRAK1. Interacts with APP (via cytoplasmic domain). In terms of tissue distribution, expressed in the brain (at protein level). Expressed in the brain, liver, kidney, spleen, heart, lung and sciatic nerve.

It is found in the cytoplasm. The protein localises to the cytoskeleton. The protein resides in the cytolytic granule membrane. It localises to the lysosome membrane. Microtubule-dependent motor required for normal distribution of mitochondria and lysosomes. Can induce formation of neurite-like membrane protrusions in non-neuronal cells in a ZFYVE27-dependent manner. Regulates centrosome and nuclear positioning during mitotic entry. During the G2 phase of the cell cycle in a BICD2-dependent manner, antagonizes dynein function and drives the separation of nuclei and centrosomes. Required for anterograde axonal transportation of MAPK8IP3/JIP3 which is essential for MAPK8IP3/JIP3 function in axon elongation. Through binding with PLEKHM2 and ARL8B, directs lysosome movement toward microtubule plus ends. Involved in NK cell-mediated cytotoxicity. Drives the polarization of cytolytic granules and microtubule-organizing centers (MTOCs) toward the immune synapse between effector NK lymphocytes and target cells. The sequence is that of Kinesin-1 heavy chain from Rattus norvegicus (Rat).